The sequence spans 202 residues: Guanylyl cyclase-activating protein 1 (202 aa).

Residue G2 is the site of N-myristoyl glycine attachment. N3 is modified (deamidated asparagine). 4 EF-hand domains span residues 31–49, 51–86, 87–122, and 131–166; these read SGQLTLYEFRQFFGLKNLS, SASQYVEQMFETFDFNKDGYIDFMEYVAALSLVLKG, KVEQKLRWYFKLYDVDGNGCIDRDELLTIIRAIRTI, and SAEEFTDTVFAKIDINGDGELSLEEFMEGVQKDQML. Residues D64, N66, D68, Y70, E75, D100, D102, N104, C106, E111, D144, N146, D148, E150, and E155 each contribute to the Ca(2+) site.

Homodimer. In the retina, expressed in rod photoreceptors (at protein level). Expressed in cone photoreceptors.

It localises to the membrane. The protein resides in the photoreceptor inner segment. Its subcellular location is the cell projection. The protein localises to the cilium. It is found in the photoreceptor outer segment. In terms of biological role, stimulates retinal guanylyl cyclase when free calcium ions concentration is low and inhibits guanylyl cyclase when free calcium ions concentration is elevated. This Ca(2+)-sensitive regulation of retinal guanylyl cyclase is a key event in recovery of the dark state of rod photoreceptors following light exposure. May be involved in cone photoreceptor light response and recovery of response in bright light. This chain is Guanylyl cyclase-activating protein 1 (Guca1a), found in Mus musculus (Mouse).